The chain runs to 769 residues: Protein transport protein sec39 (769 aa).

Belongs to the SEC39 family. Component of a peripheral membrane protein complex consisting of dsl1, sec39 and tip20.

It is found in the endoplasmic reticulum membrane. In terms of biological role, required for protein transport between the Golgi and the endoplasmic reticulum. May contribute to tethering of coatomer-coated retrograde transport vesicles to the ER membrane through interaction with and stabilization of the SNARE complex. The protein is Protein transport protein sec39 of Schizosaccharomyces pombe (strain 972 / ATCC 24843) (Fission yeast).